The following is a 473-amino-acid chain: Mogroside IIIx synthase (473 aa).

His-43 functions as the Proton acceptor in the catalytic mechanism. Asp-142 acts as the Charge relay in catalysis. 8 residues coordinate UDP-alpha-D-glucose: Ser-293, Gln-356, Trp-374, Asn-375, Ser-376, Glu-379, Asp-395, and Gln-396.

The protein belongs to the UDP-glycosyltransferase family. Highly expressed in mature fruits.

The enzyme catalyses mogroside IIE + UDP-alpha-D-glucose = mogroside IIIX + UDP + H(+). It catalyses the reaction mogroside III + UDP-alpha-D-glucose = mogroside IV + UDP + H(+). It carries out the reaction mogroside III + UDP-alpha-D-glucose = siamenoside I + UDP + H(+). The catalysed reaction is mogroside IIIX + UDP-alpha-D-glucose = mogroside IVA + UDP + H(+). The enzyme catalyses mogroside IIIX + UDP-alpha-D-glucose = siamenoside I + UDP + H(+). It catalyses the reaction mogroside IV + UDP-alpha-D-glucose = mogroside V + UDP + H(+). It carries out the reaction siamenoside I + UDP-alpha-D-glucose = mogroside V + UDP + H(+). The catalysed reaction is mogroside V + UDP-alpha-D-glucose = mogroside VI + UDP + H(+). The protein operates within secondary metabolite biosynthesis; terpenoid biosynthesis. Its activity is regulated as follows. Activity is increased by Mg(2+). UDP-glycosyltransferase involved in the biosynthesis of cucurbitacin and mogroside tetracyclic triterpene natural products (e.g. siamenoside I and mogrosides IV, V and VI). Cucurbitacins have cytotoxic properties and exhibit deterrent taste as a defense barrier against herbivores. Mogrosides are nonsugar highly oxygenated compounds used as high-intensity zero-calorie sweeteners; they also possess pharmacological properties such as regulating immunity, lowering blood sugar and lipid levels, protecting the liver, and acting as antioxidants and antitumor agents. Its function is as follows. Catalyzes the branched glucosylations of mogroside II-E, mogroside III, mogroside IIIx, mogroside IV, mogroside IV-A, siamenoside I and mogroside V, ending in the production of mogroside VI. In terms of biological role, catalyzes the beta(1-6) branched glucosylations of mogroside II-E to produce mogroside IIIx by forming a beta(1-6) glycosidic bond with the 6-hydroxyl of glucose 1-C24; a subsequent glycosylation at glucose 1-C3 leads to the formation of mogroside IV-A with beta(1-6) glycosidic bond. Can also use mogroside III-E, mogroside III-A, mogroside IV-E and mogroside IV-A as substrates. The sequence is that of Mogroside IIIx synthase from Siraitia grosvenorii (Monk's fruit).